Reading from the N-terminus, the 171-residue chain is MLRQTTKRAFLGLASQNPTPFPVVSRLYHPNVIDHYDNPRNVGSFDKNDPNVGTGLVGAPQCGDVMKLQVKFDGSGQIIDAKFKTFGCGSAIAASSVATEWVKGKSVEEVLTIKNSQIAKHLSLPPVKLHCSMLAEDAIKAAIKNYKEKQDKANGETVETIDSTYLHGIGS.

A mitochondrion-targeting transit peptide spans 1–49; that stretch reads MLRQTTKRAFLGLASQNPTPFPVVSRLYHPNVIDHYDNPRNVGSFDKND.

It belongs to the NifU family. In terms of assembly, component of the core Fe-S cluster (ISC) assembly machinery. It depends on [2Fe-2S] cluster as a cofactor. In terms of tissue distribution, mostly expressed in flowers and pollen, and, to a lower extent, in leaves and roots.

It is found in the mitochondrion matrix. The protein operates within cofactor biosynthesis; iron-sulfur cluster biosynthesis. Its function is as follows. Scaffold protein for the de novo synthesis of iron-sulfur (Fe-S) clusters within mitochondria, which is required for maturation of both mitochondrial and cytoplasmic [2Fe-2S] and [4Fe-4S] proteins. First, a [2Fe-2S] cluster is transiently assembled on the scaffold protein ISCU (ISU1, ISU2 or ISU3). In a second step, the cluster is released from ISCU, transferred to a glutaredoxin, followed by the formation of mitochondrial [2Fe-2S] proteins, the synthesis of [4Fe-4S] clusters and their target-specific insertion into the recipient apoproteins. Cluster assembly on ISCU depends on the function of the cysteine desulfurase complex NFS1-ISD11, which serves as the sulfur donor for cluster synthesis, the iron-binding protein frataxin as the putative iron donor, and the electron transfer chain comprised of ferredoxin reductase and ferredoxin, which receive their electrons from NADH. The polypeptide is Iron-sulfur cluster assembly protein 3 (ISU3) (Arabidopsis thaliana (Mouse-ear cress)).